Consider the following 473-residue polypeptide: Protein translocase subunit SecD (473 aa).

Transmembrane regions (helical) follow at residues V5–P25, A316–G336, I337–F357, P364–L384, W409–F429, and G436–T456.

This sequence belongs to the SecD/SecF family. SecD subfamily. As to quaternary structure, forms a complex with SecF. Part of the essential Sec protein translocation apparatus which comprises SecA, SecYEG and auxiliary proteins SecDF. Other proteins may also be involved.

Its subcellular location is the cell inner membrane. Functionally, part of the Sec protein translocase complex. Interacts with the SecYEG preprotein conducting channel. SecDF uses the proton motive force (PMF) to complete protein translocation after the ATP-dependent function of SecA. The polypeptide is Protein translocase subunit SecD (Elusimicrobium minutum (strain Pei191)).